The following is a 531-amino-acid chain: CTP synthase (531 aa).

An amidoligase domain region spans residues M1 to L264. CTP is bound at residue S13. A UTP-binding site is contributed by S13. G14 to V19 lines the ATP pocket. Y54 serves as a coordination point for L-glutamine. Position 71 (D71) interacts with ATP. Residues D71 and E139 each contribute to the Mg(2+) site. CTP-binding positions include D146–E148, K185–Q190, and K221. Residues K185 to Q190 and K221 contribute to the UTP site. The Glutamine amidotransferase type-1 domain maps to C293–R531. Residue G351 coordinates L-glutamine. Residue C378 is the Nucleophile; for glutamine hydrolysis of the active site. L-glutamine contacts are provided by residues F379–Q382, E402, and R459. Active-site residues include H504 and E506.

It belongs to the CTP synthase family. Homotetramer.

It catalyses the reaction UTP + L-glutamine + ATP + H2O = CTP + L-glutamate + ADP + phosphate + 2 H(+). The catalysed reaction is L-glutamine + H2O = L-glutamate + NH4(+). It carries out the reaction UTP + NH4(+) + ATP = CTP + ADP + phosphate + 2 H(+). It participates in pyrimidine metabolism; CTP biosynthesis via de novo pathway; CTP from UDP: step 2/2. Its activity is regulated as follows. Allosterically activated by GTP, when glutamine is the substrate; GTP has no effect on the reaction when ammonia is the substrate. The allosteric effector GTP functions by stabilizing the protein conformation that binds the tetrahedral intermediate(s) formed during glutamine hydrolysis. Inhibited by the product CTP, via allosteric rather than competitive inhibition. In terms of biological role, catalyzes the ATP-dependent amination of UTP to CTP with either L-glutamine or ammonia as the source of nitrogen. Regulates intracellular CTP levels through interactions with the four ribonucleotide triphosphates. In Pyrobaculum calidifontis (strain DSM 21063 / JCM 11548 / VA1), this protein is CTP synthase.